The following is a 984-amino-acid chain: Valine--tRNA ligase (984 aa).

The 'HIGH' region signature appears at Pro-65–His-75. The short motif at Lys-579 to Ser-583 is the 'KMSKS' region element. Lys-582 is a binding site for ATP. Residues Val-954–Leu-984 are a coiled coil.

The protein belongs to the class-I aminoacyl-tRNA synthetase family. ValS type 1 subfamily. In terms of assembly, monomer.

Its subcellular location is the cytoplasm. It carries out the reaction tRNA(Val) + L-valine + ATP = L-valyl-tRNA(Val) + AMP + diphosphate. Functionally, catalyzes the attachment of valine to tRNA(Val). As ValRS can inadvertently accommodate and process structurally similar amino acids such as threonine, to avoid such errors, it has a 'posttransfer' editing activity that hydrolyzes mischarged Thr-tRNA(Val) in a tRNA-dependent manner. In Psychrobacter arcticus (strain DSM 17307 / VKM B-2377 / 273-4), this protein is Valine--tRNA ligase.